Here is a 616-residue protein sequence, read N- to C-terminus: D-glutamate cyclase, mitochondrial (616 aa).

Residues 1 to 28 (MPFTLHLRSRLPSAIRSLILQKKPNIRN) constitute a mitochondrion transit peptide.

Belongs to the D-glutamate cyclase family.

The protein resides in the mitochondrion matrix. The catalysed reaction is D-glutamate = 5-oxo-D-proline + H2O. Functionally, D-glutamate cyclase that converts D-glutamate to 5-oxo-D-proline. This Homo sapiens (Human) protein is D-glutamate cyclase, mitochondrial.